The following is a 295-amino-acid chain: Putative 23S rRNA (guanine-N(1)-)-methyltransferase (295 aa).

Residues C11, C14, C31, and H35 each coordinate Zn(2+). Residues Y74, 116 to 117 (TG), and H204 contribute to the S-adenosyl-L-methionine site.

This sequence belongs to the methyltransferase superfamily. RlmA family.

Its function is as follows. Confers strong resistance to mycinamicin (MM) and tylosin (TY). May function as methyltransferase. This Micromonospora griseorubida protein is Putative 23S rRNA (guanine-N(1)-)-methyltransferase (myrA).